The chain runs to 86 residues: Large ribosomal subunit protein bL27 (86 aa).

The segment at 1-24 (MAHKKAGGSTRNGRDSESKRLGVK) is disordered.

The protein belongs to the bacterial ribosomal protein bL27 family.

The chain is Large ribosomal subunit protein bL27 from Alcanivorax borkumensis (strain ATCC 700651 / DSM 11573 / NCIMB 13689 / SK2).